A 309-amino-acid chain; its full sequence is RHOMBOID-like protein 5 (309 aa).

A run of 7 helical transmembrane segments spans residues I27–F47, I113–G133, F140–S160, V170–I190, C200–P220, V222–L242, and I274–L294. The Nucleophile role is filled by S175. The active-site Charge relay system is H227.

This sequence belongs to the peptidase S54 family.

It is found in the membrane. It carries out the reaction Cleaves type-1 transmembrane domains using a catalytic dyad composed of serine and histidine that are contributed by different transmembrane domains.. Its function is as follows. Probable rhomboid-type serine protease that catalyzes intramembrane proteolysis. May function in reproductive organs maturation. The chain is RHOMBOID-like protein 5 from Arabidopsis thaliana (Mouse-ear cress).